The following is a 427-amino-acid chain: ETS domain-containing protein Elk-1 (427 aa).

A DNA-binding region (ETS) is located at residues 5–86; that stretch reads VTLWQFLLQL…SGQKFVYKFV (82 aa). 3 disordered regions span residues 116–146, 166–202, and 226–252; these read ATVH…GLAR, LQPQ…SPNP, and PNQK…VEGP. Glycyl lysine isopeptide (Lys-Gly) (interchain with G-Cter in SUMO) cross-links involve residues Lys-229, Lys-248, and Lys-253. The span at 300-310 shows a compositional bias: polar residues; the sequence is STSTTEITQPQ. The disordered stretch occupies residues 300 to 350; the sequence is STSTTEITQPQKGRKPRDLELPLSPSLLGGQGPERTPGSGTSSGLQAQGPA. Residue Ser-323 is modified to Phosphoserine; by MAPK1. Phosphothreonine; by MAPK1 occurs at positions 335, 352, 362, and 367. The interval 348 to 398 is sufficient for interaction with MAD2L2; that stretch reads GPALTPSLLPTHTLTPVLLTPSSLPPSIHFWSTLSPIAPRSPAKLSFQFPS. Residue Thr-380 is glycosylated (O-linked (GlcNAc) threonine). Ser-382 bears the Phosphoserine; by MAPK1 and MAPK8 mark. Ser-388 carries the post-translational modification Phosphoserine; by MAPK1. Phosphothreonine; by MAPK1 is present on Thr-416. Phosphoserine; by MAPK1 is present on Ser-421.

The protein belongs to the ETS family. Interacts in its sumoylated form with PIAS2/PIASX which enhances its transcriptional activator activity. Interacts with MAD2L2; the interaction is direct and promotes phosphorylation by the kinases MAPK8 and/or MAPK9. Interacts with POU1F1. Sumoylation represses transcriptional activator activity as it results in recruitment of HDAC2 to target gene promoters which leads to decreased histone acetylation and reduced transactivator activity. It also regulates nuclear retention. In terms of processing, on mitogenic stimulation, phosphorylated on C-terminal serine and threonine residues by MAPK1. Ser-382 and Ser-388 are the preferred sites for MAPK1. In vitro, phosphorylation by MAPK1 potentiates ternary complex formation with the serum responses factors, SRE and SRF. Also phosphorylated on Ser-382 by MAPK8 and/or MAKP9. Phosphorylation leads to loss of sumoylation and restores transcriptional activator activity. Phosphorylated and activated by CAMK4, MAPK11, MAPK12 and MAPK14. Upon bFGF stimulus, phosphorylated by PAK1. Phosphorylated by PRP4K at Thr-416; phosphorylation activation ELK1 transcriptional activity.

The protein localises to the nucleus. Its function is as follows. Transcription factor that binds to purine-rich DNA sequences. Forms a ternary complex with SRF and the ETS and SRF motifs of the serum response element (SRE) on the promoter region of immediate early genes such as FOS and IER2. Induces target gene transcription upon JNK and MAPK-signaling pathways stimulation. The polypeptide is ETS domain-containing protein Elk-1 (Rattus norvegicus (Rat)).